A 202-amino-acid polypeptide reads, in one-letter code: Ribosome maturation factor RimM (202 aa).

Positions A121–Y202 constitute a PRC barrel domain.

This sequence belongs to the RimM family. In terms of assembly, binds ribosomal protein uS19.

It localises to the cytoplasm. Functionally, an accessory protein needed during the final step in the assembly of 30S ribosomal subunit, possibly for assembly of the head region. Essential for efficient processing of 16S rRNA. May be needed both before and after RbfA during the maturation of 16S rRNA. It has affinity for free ribosomal 30S subunits but not for 70S ribosomes. This Polaromonas naphthalenivorans (strain CJ2) protein is Ribosome maturation factor RimM.